A 350-amino-acid chain; its full sequence is N-acetyllactosaminide beta-1,3-N-acetylglucosaminyltransferase 4 (350 aa).

Residues 1-4 (MLPR) are Cytoplasmic-facing. Residues 5-25 (LGCVLFCSLVVLLLSCLLLLK) form a helical; Signal-anchor for type II membrane protein membrane-spanning segment. Over 26 to 350 (ERIPAGSSKA…RLKCAATHKP (325 aa)) the chain is Lumenal. N-linked (GlcNAc...) asparagine glycosylation is found at N53 and N166.

This sequence belongs to the glycosyltransferase 31 family.

Its subcellular location is the golgi apparatus membrane. It catalyses the reaction a beta-D-galactosyl-(1-&gt;4)-N-acetyl-beta-D-glucosaminyl derivative + UDP-N-acetyl-alpha-D-glucosamine = an N-acetyl-beta-D-glucosaminyl-(1-&gt;3)-beta-D-galactosyl-(1-&gt;4)-N-acetyl-beta-D-glucosaminyl derivative + UDP + H(+). It functions in the pathway protein modification; protein glycosylation. In terms of biological role, beta-1,3-N-acetylglucosaminyltransferase involved in the synthesis of poly-N-acetyllactosamine. Has activity for type 2 oligosaccharides. This is N-acetyllactosaminide beta-1,3-N-acetylglucosaminyltransferase 4 (B3gnt4) from Mus musculus (Mouse).